Reading from the N-terminus, the 276-residue chain is Pirin-like protein CC_0481 (276 aa).

Belongs to the pirin family.

The protein is Pirin-like protein CC_0481 of Caulobacter vibrioides (strain ATCC 19089 / CIP 103742 / CB 15) (Caulobacter crescentus).